Reading from the N-terminus, the 314-residue chain is Ferrochelatase (314 aa).

Residues histidine 184 and glutamate 259 each contribute to the Fe cation site.

It belongs to the ferrochelatase family.

It is found in the cytoplasm. The enzyme catalyses heme b + 2 H(+) = protoporphyrin IX + Fe(2+). The protein operates within porphyrin-containing compound metabolism; protoheme biosynthesis; protoheme from protoporphyrin-IX: step 1/1. Functionally, catalyzes the ferrous insertion into protoporphyrin IX. The protein is Ferrochelatase of Chlamydia trachomatis serovar D (strain ATCC VR-885 / DSM 19411 / UW-3/Cx).